Reading from the N-terminus, the 267-residue chain is Undecaprenyl-diphosphatase (267 aa).

A run of 8 helical transmembrane segments spans residues 4–24 (ILII…PISS), 41–61 (NIQN…ILLF), 84–104 (ILIL…GFMF), 116–136 (YISY…FISL), 160–180 (CFSL…GLIL), 185–205 (YVLF…VLIL), 216–236 (ENIF…LIFG), and 246–266 (TSLI…LFTC).

This sequence belongs to the UppP family.

Its subcellular location is the cell membrane. The enzyme catalyses di-trans,octa-cis-undecaprenyl diphosphate + H2O = di-trans,octa-cis-undecaprenyl phosphate + phosphate + H(+). Catalyzes the dephosphorylation of undecaprenyl diphosphate (UPP). Confers resistance to bacitracin. The protein is Undecaprenyl-diphosphatase of Wigglesworthia glossinidia brevipalpis.